Consider the following 264-residue polypeptide: Neurexophilin-2 (264 aa).

The signal sequence occupies residues 1-22 (MRLRPLPLVVVPGLLQLLFCDS). Residues 23 to 90 (KEVVHATEGL…WDWLANITEI (68 aa)) are II. Asparagine 86, asparagine 139, asparagine 149, and asparagine 155 each carry an N-linked (GlcNAc...) asparagine glycan. The III stretch occupies residues 91 to 169 (QEPLARTKRR…LVPPSKVVEF (79 aa)). The interval 170–178 (EVSPQSTLE) is IV (linker domain). Residues 179–264 (TKESKSFNCR…HSETPYLSSG (86 aa)) are v (Cys-rich).

The protein belongs to the neurexophilin family. In terms of processing, may be proteolytically processed at the boundary between the N-terminal non-conserved and the central conserved domain in neuron-like cells. In terms of tissue distribution, expressed in brain and kidney.

It is found in the secreted. Its function is as follows. May be signaling molecules that resemble neuropeptides and that act by binding to alpha-neurexins and possibly other receptors. This chain is Neurexophilin-2 (NXPH2), found in Homo sapiens (Human).